The sequence spans 193 residues: Putative manganese efflux pump MntP (193 aa).

A run of 6 helical transmembrane segments spans residues 6-26 (VIFI…GIAC), 48-68 (AGMV…ISAF), 71-91 (WIAF…ALQG), 108-128 (LLGV…AFAV), 132-152 (NIGL…FLGF), and 165-185 (WVGV…LAEH).

It belongs to the MntP (TC 9.B.29) family.

Its subcellular location is the cell membrane. Its function is as follows. Probably functions as a manganese efflux pump. This Dehalococcoides mccartyi (strain ATCC BAA-2100 / JCM 16839 / KCTC 5957 / BAV1) protein is Putative manganese efflux pump MntP.